A 664-amino-acid polypeptide reads, in one-letter code: MEGIDHLADERNKAEFDVEDMKIVWAGSRHAFEVSDRIARLVASDPVFEKSNRARLSRKELFKSTLRKCAHAFKRIIELRLNEEEAGRLRHFIDQPAYVDLHWGMFVPAIKGQGTEEQQKKWLSLANKMQIIGCYAQTELGHGSNVQGLETTATFDPKTDEFVIHTPTQTASKWWPGGLGKVSTHAVVYARLITNGKDYGIHGFIVQLRSLEDHSPLPNITVGDIGTKMGNGAYNSMDNGFLMFDHVRIPRDQMLMRLSKVTREGEYVPSDVPKQLVYGTMVYVRQTIVADASNALSRAVCIATRYSAVRRQFGAHNGGIETQVIDYKTQQNRLFPLLASAYAFRFVGEWLKWLYTDVTERLAASDFATLPEAHACTAGLKSLTTTATADGIEECRKLCGGHGYLWCSGLPELFAVYVPACTYEGDNVVLQLQVARFLMKTVAQLGSGKVPVGTTAYMGRAAHLLQCRSGVQKAEDWLNPDVVLEAFEARALRMAVTCAKNLSKFENQEQGFQELLADLVEAAIAHCQLIVVSKFIAKLEQDIGGKGVKKQLNNLCYIYALYLLHKHLGDFLSTNCITPKQASLANDQLRSLYTQVRPNAVALVDAFNYTDHYLNSVLGRYDGNVYPKLFEEALKDPLNDSVVPDGYQEYLRPVLQQQLRTARL.

FAD is bound by residues tyrosine 135, glutamine 137, threonine 138, serine 144, glycine 177, arginine 310, glutamine 330, arginine 333, glycine 401, and threonine 422. The Proton acceptor role is filled by glutamate 424. Aspartate 426 provides a ligand contact to FAD. Cysteine 467 and cysteine 576 are disulfide-bonded. A Microbody targeting signal motif is present at residues 662–664 (ARL).

The protein belongs to the acyl-CoA oxidase family. Homodimer. FAD is required as a cofactor. As to expression, expressed mainly in flowers and young seedlings. Lower expression in roots, leaves and bracts.

It is found in the peroxisome. The catalysed reaction is a 2,3-saturated acyl-CoA + O2 = a (2E)-enoyl-CoA + H2O2. Catalyzes the desaturation of both long- and medium-chain acyl-CoAs to 2-trans-enoyl-CoAs. Most active with C14-CoA. Activity on long-chain mono-unsaturated substrates is 40% higher than with the corresponding saturated substrates. Seems to be an important factor in the general metabolism of root tips. May be involved in the biosynthesis of jasmonic acid. This Arabidopsis thaliana (Mouse-ear cress) protein is Peroxisomal acyl-coenzyme A oxidase 1.